Consider the following 111-residue polypeptide: Large ribosomal subunit protein uL22 (111 aa).

Belongs to the universal ribosomal protein uL22 family. Part of the 50S ribosomal subunit.

Its function is as follows. This protein binds specifically to 23S rRNA; its binding is stimulated by other ribosomal proteins, e.g. L4, L17, and L20. It is important during the early stages of 50S assembly. It makes multiple contacts with different domains of the 23S rRNA in the assembled 50S subunit and ribosome. The globular domain of the protein is located near the polypeptide exit tunnel on the outside of the subunit, while an extended beta-hairpin is found that lines the wall of the exit tunnel in the center of the 70S ribosome. In Clostridioides difficile (strain 630) (Peptoclostridium difficile), this protein is Large ribosomal subunit protein uL22.